We begin with the raw amino-acid sequence, 787 residues long: Protocadherin beta-15 (787 aa).

An N-terminal signal peptide occupies residues 1–26; that stretch reads MEPAGERFPEQRQVLILLLLLEVTLA. The Extracellular portion of the chain corresponds to 27-690; the sequence is GWEPRRYSVM…AQADSLTVYL (664 aa). Cadherin domains follow at residues 35–133, 138–242, 247–347, 352–451, and 456–561; these read VMEE…SPEF, ITLK…APEF, YEVQ…FPEL, LTSP…APAF, and YTLF…SPFV. Residues N418 and N436 are each glycosylated (N-linked (GlcNAc...) asparagine). Residue N567 is glycosylated (N-linked (GlcNAc...) asparagine). Residues 568-671 enclose the Cadherin 6 domain; the sequence is GSAPCTELVP…LVDGFSQPYL (104 aa). Residues 691 to 711 form a helical membrane-spanning segment; it reads VVALASVSSLFLFSVLLFVAV. Residues 712–787 are Cytoplasmic-facing; the sequence is RLCRRSRAAS…DSRRKSEFLE (76 aa).

The protein resides in the cell membrane. Its function is as follows. Potential calcium-dependent cell-adhesion protein. May be involved in the establishment and maintenance of specific neuronal connections in the brain. In Pan troglodytes (Chimpanzee), this protein is Protocadherin beta-15 (PCDHB15).